Here is a 427-residue protein sequence, read N- to C-terminus: 3-phosphoshikimate 1-carboxyvinyltransferase (427 aa).

3-phosphoshikimate is bound by residues Lys20, Ser21, and Arg25. Phosphoenolpyruvate is bound at residue Lys20. 2 residues coordinate phosphoenolpyruvate: Gly92 and Arg120. 3-phosphoshikimate contacts are provided by Ser166, Gln168, Asp312, and Lys339. Gln168 serves as a coordination point for phosphoenolpyruvate. Asp312 functions as the Proton acceptor in the catalytic mechanism. Residues Arg343 and Arg385 each coordinate phosphoenolpyruvate.

It belongs to the EPSP synthase family. Monomer.

The protein localises to the cytoplasm. It catalyses the reaction 3-phosphoshikimate + phosphoenolpyruvate = 5-O-(1-carboxyvinyl)-3-phosphoshikimate + phosphate. It participates in metabolic intermediate biosynthesis; chorismate biosynthesis; chorismate from D-erythrose 4-phosphate and phosphoenolpyruvate: step 6/7. In terms of biological role, catalyzes the transfer of the enolpyruvyl moiety of phosphoenolpyruvate (PEP) to the 5-hydroxyl of shikimate-3-phosphate (S3P) to produce enolpyruvyl shikimate-3-phosphate and inorganic phosphate. The polypeptide is 3-phosphoshikimate 1-carboxyvinyltransferase (Streptococcus equi subsp. zooepidemicus (strain MGCS10565)).